The primary structure comprises 192 residues: E3 ubiquitin-protein ligase RNF185 (192 aa).

Low complexity predominate over residues 1 to 27 (MASKGPSASASPENSSAGGPSGSSNGA). Positions 1 to 30 (MASKGPSASASPENSSAGGPSGSSNGAGES) are disordered. Residues 1 to 130 (MASKGPSASA…GGFQGFGFGD (130 aa)) are Cytoplasmic-facing. The interval 29–80 (ESGGQDSTFECNICLDTAKDAVISLCGHLFCWPCLHQWLETRPNRQVCPVCK) is required for ubiquitin ligase activity and protection against ER stress-induced cell death. The RING-type zinc finger occupies 39 to 80 (CNICLDTAKDAVISLCGHLFCWPCLHQWLETRPNRQVCPVCK). Residues 90–123 (PLYGRGSTGQQDPREKTPPRPQGQRPEPENRGGF) form a disordered region. The helical transmembrane segment at 131–151 (GGFQMSFGIGAFPFGIFATAF) threads the bilayer. The Mitochondrial intermembrane portion of the chain corresponds to 152-171 (NINDGRPPPAVPGTPQYVDE). Residues 172-192 (QFLSRLFLFVALVIMFWLLIA) traverse the membrane as a helical segment.

Interacts with ATG5 and BNIP1. As to expression, ubiquitously expressed.

It localises to the mitochondrion outer membrane. It is found in the endoplasmic reticulum membrane. The catalysed reaction is S-ubiquitinyl-[E2 ubiquitin-conjugating enzyme]-L-cysteine + [acceptor protein]-L-lysine = [E2 ubiquitin-conjugating enzyme]-L-cysteine + N(6)-ubiquitinyl-[acceptor protein]-L-lysine.. Its pathway is protein modification; protein ubiquitination. In terms of biological role, E3 ubiquitin-protein ligase that regulates selective mitochondrial autophagy by mediating 'Lys-63'-linked polyubiquitination of BNIP1. Acts in the endoplasmic reticulum (ER)-associated degradation (ERAD) pathway, which targets misfolded proteins that accumulate in the endoplasmic reticulum (ER) for ubiquitination and subsequent proteasome-mediated degradation. Protects cells from ER stress-induced apoptosis. Responsible for the cotranslational ubiquitination and degradation of CFTR in the ERAD pathway. Also acts as a regulator of the innate antiviral response by catalyzing 'Lys-27'-linked polyubiquitination of CGAS at 'Lys-173' and 'Lys-384', thereby promoting CGAS cyclic GMP-AMP synthase activity. Preferentially associates with the E2 enzymes UBE2J1 and UBE2J2. The protein is E3 ubiquitin-protein ligase RNF185 of Homo sapiens (Human).